The sequence spans 263 residues: 22 kDa alpha-zein 16 (263 aa).

An N-terminal signal peptide occupies residues 1-21 (MATKILALLALLALLVSATNA).

Belongs to the zein family. As to expression, expressed in developing endosperm.

Zeins are major seed storage proteins. The polypeptide is 22 kDa alpha-zein 16 (Zea mays (Maize)).